The chain runs to 346 residues: G-protein coupled receptor 42 (346 aa).

Topologically, residues 1 to 19 (MDTGPDQSYFSGNHWFVFS) are extracellular. Residues 20–40 (VYLLTFLVGLPLNLLALVVFV) form a helical membrane-spanning segment. The Cytoplasmic portion of the chain corresponds to 41-47 (GKLRCRP). The helical transmembrane segment at 48 to 68 (VAVDVLLLNLTASDLLLLLFL) threads the bilayer. Topologically, residues 69–90 (PFRMVEAANGMHWPLPFILCPL) are extracellular. A helical transmembrane segment spans residues 91–111 (SGFIFFTTIYLTALFLAAVSI). The Cytoplasmic segment spans residues 112 to 132 (ERFLSVAHPLWYKTRPRLGQA). The chain crosses the membrane as a helical span at residues 133 to 153 (GLVSVACWLLASAHCSVVYVI). Residues 154 to 178 (EFSGDISHSQGTNGTCYLEFRKDQL) lie on the Extracellular side of the membrane. An N-linked (GlcNAc...) asparagine glycan is attached at N166. Residues 179–199 (AILLPVRLEMAVVLFVVPLII) form a helical membrane-spanning segment. Topologically, residues 200 to 222 (TSYCYSRLVWILGRGGSHRRQRR) are cytoplasmic. A helical transmembrane segment spans residues 223 to 243 (VAGLVAATLLNFLVCFGPYNV). The Extracellular portion of the chain corresponds to 244–258 (SHVVGYICGESPVWR). A helical membrane pass occupies residues 259–279 (IYVTLLSTLNSCVDPFVYYFS). Residues 280-346 (SSGFQADFHE…TGGQVACAEN (67 aa)) are Cytoplasmic-facing. Positions 307–330 (MELKEQKGGEEQRADRPAERKTSE) are enriched in basic and acidic residues. The disordered stretch occupies residues 307–346 (MELKEQKGGEEQRADRPAERKTSEHSQGCGTGGQVACAEN).

Belongs to the G-protein coupled receptor 1 family.

Its subcellular location is the cell membrane. G protein-coupled receptor that is activated by short chain fatty acids (SCFAs), such as propionate. Hence may play a role in the regulation of whole-body energy homeostasis and/or in intestinal immunity. This is G-protein coupled receptor 42 (GPR42) from Homo sapiens (Human).